A 270-amino-acid chain; its full sequence is L-fucose dehydrogenase (270 aa).

NAD(+) contacts are provided by Arg-19, Ile-21, Asp-40, Lys-41, Asp-62, Val-63, Asn-89, Tyr-154, Lys-158, Ile-187, Thr-189, and Leu-191.

The protein belongs to the short-chain dehydrogenases/reductases (SDR) family.

The catalysed reaction is L-fucose + NAD(+) = L-fucono-1,5-lactone + NADH + H(+). It carries out the reaction D-arabinose + NAD(+) = D-arabinono-1,5-lactone + NADH + H(+). The enzyme catalyses L-galactose + NAD(+) = L-galactono-1,5-lactone + NADH + H(+). Functionally, catalyzes the NAD(+)-dependent oxidation of L-fucose, yielding L-fucono-1,5-lactone, which rapidly converts spontaneously to L-fucone-1,4-lactone. Does not use NADPH. Displays low activity on L-fucose, D-arabinose and L-galactose compared with rabbit and human. This is consitent with the low L-fucose metabolism observed in this species. This is L-fucose dehydrogenase (Hsd17b14) from Rattus norvegicus (Rat).